Here is a 235-residue protein sequence, read N- to C-terminus: Large ribosomal subunit protein uL4 (235 aa).

The segment at 45–75 (RAGTASTKTRGEVSGGGRKPWPQKHTGRARH) is disordered. A compositionally biased stretch (basic residues) spans 65 to 75 (WPQKHTGRARH).

This sequence belongs to the universal ribosomal protein uL4 family. In terms of assembly, part of the 50S ribosomal subunit.

One of the primary rRNA binding proteins, this protein initially binds near the 5'-end of the 23S rRNA. It is important during the early stages of 50S assembly. It makes multiple contacts with different domains of the 23S rRNA in the assembled 50S subunit and ribosome. Its function is as follows. Forms part of the polypeptide exit tunnel. This is Large ribosomal subunit protein uL4 from Thermotoga petrophila (strain ATCC BAA-488 / DSM 13995 / JCM 10881 / RKU-1).